Here is a 218-residue protein sequence, read N- to C-terminus: Cytidylate kinase (218 aa).

10 to 18 provides a ligand contact to ATP; that stretch reads GPAAAGKST.

Belongs to the cytidylate kinase family. Type 1 subfamily.

The protein localises to the cytoplasm. It carries out the reaction CMP + ATP = CDP + ADP. It catalyses the reaction dCMP + ATP = dCDP + ADP. The sequence is that of Cytidylate kinase from Staphylococcus haemolyticus (strain JCSC1435).